The chain runs to 175 residues: ATP synthase subunit b (175 aa).

Residues 19-39 (LVVGTIAFALLVFVLLKFVMP) form a helical membrane-spanning segment.

Belongs to the ATPase B chain family. F-type ATPases have 2 components, F(1) - the catalytic core - and F(0) - the membrane proton channel. F(1) has five subunits: alpha(3), beta(3), gamma(1), delta(1), epsilon(1). F(0) has three main subunits: a(1), b(2) and c(10-14). The alpha and beta chains form an alternating ring which encloses part of the gamma chain. F(1) is attached to F(0) by a central stalk formed by the gamma and epsilon chains, while a peripheral stalk is formed by the delta and b chains.

Its subcellular location is the cell membrane. Its function is as follows. F(1)F(0) ATP synthase produces ATP from ADP in the presence of a proton or sodium gradient. F-type ATPases consist of two structural domains, F(1) containing the extramembraneous catalytic core and F(0) containing the membrane proton channel, linked together by a central stalk and a peripheral stalk. During catalysis, ATP synthesis in the catalytic domain of F(1) is coupled via a rotary mechanism of the central stalk subunits to proton translocation. Functionally, component of the F(0) channel, it forms part of the peripheral stalk, linking F(1) to F(0). This chain is ATP synthase subunit b, found in Salinispora tropica (strain ATCC BAA-916 / DSM 44818 / JCM 13857 / NBRC 105044 / CNB-440).